The chain runs to 82 residues: Small ribosomal subunit protein bS16 (82 aa).

It belongs to the bacterial ribosomal protein bS16 family.

The polypeptide is Small ribosomal subunit protein bS16 (Elusimicrobium minutum (strain Pei191)).